Consider the following 159-residue polypeptide: Transcription elongation factor GreA (159 aa).

Positions 14 to 76 (VKKLEEELEY…QLENMLRNAN (63 aa)) form a coiled coil.

This sequence belongs to the GreA/GreB family.

Its function is as follows. Necessary for efficient RNA polymerase transcription elongation past template-encoded arresting sites. The arresting sites in DNA have the property of trapping a certain fraction of elongating RNA polymerases that pass through, resulting in locked ternary complexes. Cleavage of the nascent transcript by cleavage factors such as GreA or GreB allows the resumption of elongation from the new 3'terminus. GreA releases sequences of 2 to 3 nucleotides. In Clostridium novyi (strain NT), this protein is Transcription elongation factor GreA.